Reading from the N-terminus, the 117-residue chain is Large ribosomal subunit protein uL18 (117 aa).

This sequence belongs to the universal ribosomal protein uL18 family. As to quaternary structure, part of the 50S ribosomal subunit; part of the 5S rRNA/L5/L18/L25 subcomplex. Contacts the 5S and 23S rRNAs.

This is one of the proteins that bind and probably mediate the attachment of the 5S RNA into the large ribosomal subunit, where it forms part of the central protuberance. This Aliivibrio fischeri (strain ATCC 700601 / ES114) (Vibrio fischeri) protein is Large ribosomal subunit protein uL18.